We begin with the raw amino-acid sequence, 505 residues long: ATP synthase subunit alpha (505 aa).

Position 171-178 (171-178) interacts with ATP; sequence GDRQTGKT.

The protein belongs to the ATPase alpha/beta chains family. F-type ATPases have 2 components, CF(1) - the catalytic core - and CF(0) - the membrane proton channel. CF(1) has five subunits: alpha(3), beta(3), gamma(1), delta(1), epsilon(1). CF(0) has three main subunits: a(1), b(2) and c(9-12). The alpha and beta chains form an alternating ring which encloses part of the gamma chain. CF(1) is attached to CF(0) by a central stalk formed by the gamma and epsilon chains, while a peripheral stalk is formed by the delta and b chains.

It localises to the cell inner membrane. The catalysed reaction is ATP + H2O + 4 H(+)(in) = ADP + phosphate + 5 H(+)(out). Its function is as follows. Produces ATP from ADP in the presence of a proton gradient across the membrane. The alpha chain is a regulatory subunit. This Campylobacter hominis (strain ATCC BAA-381 / DSM 21671 / CCUG 45161 / LMG 19568 / NCTC 13146 / CH001A) protein is ATP synthase subunit alpha.